Consider the following 379-residue polypeptide: UDP-4-amino-4-deoxy-L-arabinose--oxoglutarate aminotransferase (379 aa).

N6-(pyridoxal phosphate)lysine is present on Lys182.

This sequence belongs to the DegT/DnrJ/EryC1 family. ArnB subfamily. In terms of assembly, homodimer. The cofactor is pyridoxal 5'-phosphate.

It catalyses the reaction UDP-4-amino-4-deoxy-beta-L-arabinose + 2-oxoglutarate = UDP-beta-L-threo-pentopyranos-4-ulose + L-glutamate. The protein operates within nucleotide-sugar biosynthesis; UDP-4-deoxy-4-formamido-beta-L-arabinose biosynthesis; UDP-4-deoxy-4-formamido-beta-L-arabinose from UDP-alpha-D-glucuronate: step 2/3. It functions in the pathway bacterial outer membrane biogenesis; lipopolysaccharide biosynthesis. Its function is as follows. Catalyzes the conversion of UDP-4-keto-arabinose (UDP-Ara4O) to UDP-4-amino-4-deoxy-L-arabinose (UDP-L-Ara4N). The modified arabinose is attached to lipid A and is required for resistance to polymyxin and cationic antimicrobial peptides. The protein is UDP-4-amino-4-deoxy-L-arabinose--oxoglutarate aminotransferase of Erwinia tasmaniensis (strain DSM 17950 / CFBP 7177 / CIP 109463 / NCPPB 4357 / Et1/99).